The chain runs to 66 residues: UPF0370 protein YpfN (66 aa).

The chain crosses the membrane as a helical span at residues 4 to 24 (LAKYWWILVLVFLVGVLLNVI). The disordered stretch occupies residues 39-66 (KPELPPHRDFNDKWDDEDDWPKKDQPKK). A compositionally biased stretch (basic and acidic residues) spans 42–51 (LPPHRDFNDK).

It belongs to the UPF0370 family.

The protein localises to the cell membrane. In Salmonella paratyphi C (strain RKS4594), this protein is UPF0370 protein YpfN.